Reading from the N-terminus, the 54-residue chain is Ribulose bisphosphate carboxylase large chain (54 aa).

Positions 1–2 are excised as a propeptide; the sequence is MS. Residue Pro-3 is modified to N-acetylproline. Lys-14 carries the N6,N6,N6-trimethyllysine modification.

Belongs to the RuBisCO large chain family. Type I subfamily. Heterohexadecamer of 8 large chains and 8 small chains.

The protein localises to the plastid. It is found in the chloroplast. It catalyses the reaction 2 (2R)-3-phosphoglycerate + 2 H(+) = D-ribulose 1,5-bisphosphate + CO2 + H2O. The enzyme catalyses D-ribulose 1,5-bisphosphate + O2 = 2-phosphoglycolate + (2R)-3-phosphoglycerate + 2 H(+). Its function is as follows. RuBisCO catalyzes two reactions: the carboxylation of D-ribulose 1,5-bisphosphate, the primary event in carbon dioxide fixation, as well as the oxidative fragmentation of the pentose substrate in the photorespiration process. Both reactions occur simultaneously and in competition at the same active site. The chain is Ribulose bisphosphate carboxylase large chain (rbcL) from Rhamnus cathartica (Common buckthorn).